Reading from the N-terminus, the 727-residue chain is Elongation factor 2 (727 aa).

The tr-type G domain maps to 19 to 260 (EQIRNMGICA…MSIKHLPNPL (242 aa)). GTP contacts are provided by residues 28–35 (AHIDHGKT), 94–98 (DTPGH), and 148–151 (NKVD). Diphthamide is present on H603.

Belongs to the TRAFAC class translation factor GTPase superfamily. Classic translation factor GTPase family. EF-G/EF-2 subfamily.

The protein localises to the cytoplasm. Its function is as follows. Catalyzes the GTP-dependent ribosomal translocation step during translation elongation. During this step, the ribosome changes from the pre-translocational (PRE) to the post-translocational (POST) state as the newly formed A-site-bound peptidyl-tRNA and P-site-bound deacylated tRNA move to the P and E sites, respectively. Catalyzes the coordinated movement of the two tRNA molecules, the mRNA and conformational changes in the ribosome. The sequence is that of Elongation factor 2 from Methanococcus maripaludis (strain DSM 14266 / JCM 13030 / NBRC 101832 / S2 / LL).